The chain runs to 517 residues: ATP synthase subunit alpha (517 aa).

175-182 contacts ATP; sequence GDRQTGKT.

The protein belongs to the ATPase alpha/beta chains family. In terms of assembly, F-type ATPases have 2 components, CF(1) - the catalytic core - and CF(0) - the membrane proton channel. CF(1) has five subunits: alpha(3), beta(3), gamma(1), delta(1), epsilon(1). CF(0) has three main subunits: a(1), b(2) and c(9-12). The alpha and beta chains form an alternating ring which encloses part of the gamma chain. CF(1) is attached to CF(0) by a central stalk formed by the gamma and epsilon chains, while a peripheral stalk is formed by the delta and b chains.

It localises to the cell membrane. It carries out the reaction ATP + H2O + 4 H(+)(in) = ADP + phosphate + 5 H(+)(out). In terms of biological role, produces ATP from ADP in the presence of a proton gradient across the membrane. The alpha chain is a regulatory subunit. In Herpetosiphon aurantiacus (strain ATCC 23779 / DSM 785 / 114-95), this protein is ATP synthase subunit alpha.